The chain runs to 399 residues: Elongation factor Tu (399 aa).

Residues 10–209 (KPHVNIGTIG…AVDSYIPTPT (200 aa)) form the tr-type G domain. The G1 stretch occupies residues 19–26 (GHVDHGKT). 19–26 (GHVDHGKT) is a binding site for GTP. Residue Thr-26 coordinates Mg(2+). The interval 60 to 64 (GITIA) is G2. The interval 81 to 84 (DCPG) is G3. GTP-binding positions include 81–85 (DCPGH) and 136–139 (NKAD). The segment at 136 to 139 (NKAD) is G4. Residues 174-176 (SAL) are G5.

This sequence belongs to the TRAFAC class translation factor GTPase superfamily. Classic translation factor GTPase family. EF-Tu/EF-1A subfamily. Monomer.

The protein resides in the cytoplasm. The enzyme catalyses GTP + H2O = GDP + phosphate + H(+). Functionally, GTP hydrolase that promotes the GTP-dependent binding of aminoacyl-tRNA to the A-site of ribosomes during protein biosynthesis. The protein is Elongation factor Tu of Campylobacter jejuni (strain RM1221).